An 85-amino-acid chain; its full sequence is MKFCVAVSLLIIASMAGVISVSGYDVYPRDYAGNYYYCGVRKDPDCSKVCKLHGATVGYCHVKRCSCVDLPEKNQNFLSVIWKQC.

The signal sequence occupies residues 1-23 (MKFCVAVSLLIIASMAGVISVSG). The LCN-type CS-alpha/beta domain occupies 24–85 (YDVYPRDYAG…NFLSVIWKQC (62 aa)). Disulfide bonds link C38-C60, C46-C65, and C50-C67.

Belongs to the long (3 C-C) scorpion toxin superfamily. Expressed by the venom gland.

Its subcellular location is the secreted. In Lychas mucronatus (Chinese swimming scorpion), this protein is Neurotoxin 60.35.